We begin with the raw amino-acid sequence, 82 residues long: Cytochrome b559 subunit alpha (82 aa).

Residues 22-36 (IIHAVTLPAIFIAGF) form a helical membrane-spanning segment. Residue histidine 24 participates in heme binding.

It belongs to the PsbE/PsbF family. In terms of assembly, heterodimer of an alpha subunit and a beta subunit. PSII is composed of 1 copy each of membrane proteins PsbA, PsbB, PsbC, PsbD, PsbE, PsbF, PsbH, PsbI, PsbJ, PsbK, PsbL, PsbM, PsbT, PsbX, PsbY, Psb30/Ycf12, peripheral proteins PsbO, CyanoQ (PsbQ), PsbU, PsbV and a large number of cofactors. It forms dimeric complexes. Heme b is required as a cofactor.

It localises to the cellular thylakoid membrane. Its function is as follows. This b-type cytochrome is tightly associated with the reaction center of photosystem II (PSII). PSII is a light-driven water:plastoquinone oxidoreductase that uses light energy to abstract electrons from H(2)O, generating O(2) and a proton gradient subsequently used for ATP formation. It consists of a core antenna complex that captures photons, and an electron transfer chain that converts photonic excitation into a charge separation. The polypeptide is Cytochrome b559 subunit alpha (Prochlorococcus marinus (strain MIT 9211)).